The sequence spans 101 residues: uncharacterized protein (101 aa).

This is an uncharacterized protein from Encephalitozoon cuniculi (strain GB-M1) (Microsporidian parasite).